The following is a 772-amino-acid chain: MIENNKEITLDIIKLLPKAELHRHLDGSIRISTLLELAKEQNVELPTYDQNELAKLIHKDENCSGLVNFLEAFQYTCSVLQHAYAITRVFYEMCEDAVADGVSYLEIRFSPVLHTSFGLSLSEVMEAVCDGMAIAELNLPIKARIIVCGLRHLDPSISKDLAEITWRYRHKGAIAFDLAGPEDGFSSKHHKEAFSIIRNKGINCTLHSGEDSNWTSVADSIHHCGAHRIGHGIAIQQNEELLNHVVNRRIPIECCITSNYQIKAISNASEHPIRKYFDSGAIVSICCDNCTMSNITLSGEYKLAIDTFNFKVEEVIRLIDYSFASSFIDPPLKINIRRESFKKALKIFQTNGYDISGVIENKFYYFEEIGLDVELEIQNNLANNFSLGKNVIRNYPQITLELLENLPKSDLHCRFDGGVSIEQIWNEVQLLGIDKCEKSKQEFLKKLSSKHLACYANFKDFKEFKSLIQSSSHTPQTIRLSKEIINLLLQTPEQINRAFDDIIKVALKDKVQYLELMIRPNSHSRNGLTKEQVLALIIENKDKWEKSSSIKIGLVVFSSSTSDDPIETLDSARLAIANRNSGVIGFGIFGADPISPTESRHFSQTFSLLKENNFNLVQFAGKSDVESLISTIHCSGSTRLSGAFQSHKIPRLMSYLGNYSIPVEISLTEKLKSFTSDDLSFTTPIRHLLDGKCPVVICSFRSSLYPYSRSKMYYKIVKNAKLDFKQVVRLLKNPFAYNFQSHQQRIELVQQFNKLSKEYLNSVNINYSNIII.

2 residues coordinate Zn(2+): H22 and H24. Substrate is bound by residues H24, D26, and G180. Position 207 (H207) interacts with Zn(2+). E210 (proton donor) is an active-site residue. D288 is a binding site for Zn(2+).

The protein belongs to the metallo-dependent hydrolases superfamily. Adenosine and AMP deaminases family. The cofactor is Zn(2+).

The enzyme catalyses adenosine + H2O + H(+) = inosine + NH4(+). Functionally, catalyzes the hydrolytic deamination of adenosine. Plays an important role in purine metabolism and in adenosine homeostasis, and may thereby contribute to cellular signaling events. This Dictyostelium discoideum (Social amoeba) protein is Probable adenosine deaminase (ada).